The following is a 115-amino-acid chain: Putative membrane protein insertion efficiency factor (115 aa).

Belongs to the UPF0161 family.

The protein resides in the cell membrane. Could be involved in insertion of integral membrane proteins into the membrane. This Mycolicibacterium paratuberculosis (strain ATCC BAA-968 / K-10) (Mycobacterium paratuberculosis) protein is Putative membrane protein insertion efficiency factor.